Reading from the N-terminus, the 427-residue chain is Serine--tRNA ligase (427 aa).

232 to 234 (TAE) is a binding site for L-serine. 263–265 (RSE) lines the ATP pocket. L-serine is bound at residue E286. 350-353 (EISS) contributes to the ATP binding site. S385 lines the L-serine pocket.

This sequence belongs to the class-II aminoacyl-tRNA synthetase family. Type-1 seryl-tRNA synthetase subfamily. As to quaternary structure, homodimer. The tRNA molecule binds across the dimer.

The protein resides in the cytoplasm. The enzyme catalyses tRNA(Ser) + L-serine + ATP = L-seryl-tRNA(Ser) + AMP + diphosphate + H(+). It carries out the reaction tRNA(Sec) + L-serine + ATP = L-seryl-tRNA(Sec) + AMP + diphosphate + H(+). The protein operates within aminoacyl-tRNA biosynthesis; selenocysteinyl-tRNA(Sec) biosynthesis; L-seryl-tRNA(Sec) from L-serine and tRNA(Sec): step 1/1. Its function is as follows. Catalyzes the attachment of serine to tRNA(Ser). Is also able to aminoacylate tRNA(Sec) with serine, to form the misacylated tRNA L-seryl-tRNA(Sec), which will be further converted into selenocysteinyl-tRNA(Sec). This chain is Serine--tRNA ligase, found in Aromatoleum aromaticum (strain DSM 19018 / LMG 30748 / EbN1) (Azoarcus sp. (strain EbN1)).